The sequence spans 280 residues: ATP synthase subunit a (280 aa).

A run of 7 helical transmembrane segments spans residues 45–65 (AINV…LFLF), 105–125 (LVAP…LMDL), 126–146 (LPVD…LKVV), 159–179 (LSIF…GGFF), 190–210 (FLFP…PISL), 223–243 (MIFI…LFGG), and 250–270 (AVFH…LTIV).

Belongs to the ATPase A chain family. F-type ATPases have 2 components, CF(1) - the catalytic core - and CF(0) - the membrane proton channel. CF(1) has five subunits: alpha(3), beta(3), gamma(1), delta(1), epsilon(1). CF(0) has three main subunits: a(1), b(2) and c(9-12). The alpha and beta chains form an alternating ring which encloses part of the gamma chain. CF(1) is attached to CF(0) by a central stalk formed by the gamma and epsilon chains, while a peripheral stalk is formed by the delta and b chains.

It localises to the cell inner membrane. Key component of the proton channel; it plays a direct role in the translocation of protons across the membrane. This is ATP synthase subunit a from Thiobacillus denitrificans (strain ATCC 25259 / T1).